Here is a 479-residue protein sequence, read N- to C-terminus: Catalase A (479 aa).

A compositionally biased stretch (polar residues) spans 1-21; it reads MSKILTTASGAPVADNQNSRS. The disordered stretch occupies residues 1 to 25; the sequence is MSKILTTASGAPVADNQNSRSAGPR. Catalysis depends on residues His53 and Asn126. A heme-binding site is contributed by Tyr336. Residues 350 to 376 are disordered; sequence QLPVNAPRCPVNSYQRDGSMATGSYGS. Residues 361 to 376 are compositionally biased toward polar residues; the sequence is NSYQRDGSMATGSYGS.

It belongs to the catalase family. Requires heme as cofactor.

The catalysed reaction is 2 H2O2 = O2 + 2 H2O. With respect to regulation, activated by peroxide. Functionally, the major expressed catalase protein in strain Corvallis in stationary phase. Decomposes hydrogen peroxide into water and oxygen; serves to protect cells from the toxic effects of hydrogen peroxide. The polypeptide is Catalase A (katA) (Pseudomonas putida (Arthrobacter siderocapsulatus)).